We begin with the raw amino-acid sequence, 148 residues long: Single-stranded DNA-binding protein 2 (148 aa).

The SSB domain occupies 4–109 (INSVIIAGNL…IKARRIQFLN (106 aa)).

As to quaternary structure, homotetramer.

The protein is Single-stranded DNA-binding protein 2 (ssb2) of Chlorobaculum tepidum (strain ATCC 49652 / DSM 12025 / NBRC 103806 / TLS) (Chlorobium tepidum).